The following is a 200-amino-acid chain: Recombination protein RecR (200 aa).

Residues 60–75 (CVYCQALTEDDVCNIC) form a C4-type zinc finger. In terms of domain architecture, Toprim spans 83–177 (TKLCIIESML…KISRIGFGVP (95 aa)).

This sequence belongs to the RecR family.

May play a role in DNA repair. It seems to be involved in an RecBC-independent recombinational process of DNA repair. It may act with RecF and RecO. The polypeptide is Recombination protein RecR (Francisella tularensis subsp. tularensis (strain WY96-3418)).